The following is a 190-amino-acid chain: Anthranilate synthase component II (190 aa).

Residues 1 to 190 enclose the Glutamine amidotransferase type-1 domain; sequence MILIIDNYDS…ENFCTGIAKA (190 aa). Residue 51–53 coordinates L-glutamine; that stretch reads GPG. The active-site Nucleophile; for GATase activity is Cys-76. L-glutamine is bound by residues Gln-80 and 126 to 127; that span reads SL. Residues His-167 and Glu-169 contribute to the active site.

As to quaternary structure, tetramer of two components I and two components II.

The enzyme catalyses chorismate + L-glutamine = anthranilate + pyruvate + L-glutamate + H(+). The protein operates within amino-acid biosynthesis; L-tryptophan biosynthesis; L-tryptophan from chorismate: step 1/5. The chain is Anthranilate synthase component II (trpG2) from Haloarcula marismortui (strain ATCC 43049 / DSM 3752 / JCM 8966 / VKM B-1809) (Halobacterium marismortui).